The chain runs to 546 residues: Phosphomethylpyrimidine synthase (546 aa).

Positions 1–19 are enriched in polar residues; that stretch reads MSTPSSRSQAPETVTTGPI. Residues 1–20 are disordered; that stretch reads MSTPSSRSQAPETVTTGPIQ. Residues Asn-146, Met-175, Tyr-204, His-240, 260-262, 301-304, and Glu-340 each bind substrate; these read SRG and DGLR. A Zn(2+)-binding site is contributed by His-344. Tyr-367 provides a ligand contact to substrate. His-408 is a Zn(2+) binding site. The [4Fe-4S] cluster site is built by Cys-488, Cys-491, and Cys-496.

This sequence belongs to the ThiC family. [4Fe-4S] cluster is required as a cofactor.

The enzyme catalyses 5-amino-1-(5-phospho-beta-D-ribosyl)imidazole + S-adenosyl-L-methionine = 4-amino-2-methyl-5-(phosphooxymethyl)pyrimidine + CO + 5'-deoxyadenosine + formate + L-methionine + 3 H(+). The protein operates within cofactor biosynthesis; thiamine diphosphate biosynthesis. Its function is as follows. Catalyzes the synthesis of the hydroxymethylpyrimidine phosphate (HMP-P) moiety of thiamine from aminoimidazole ribotide (AIR) in a radical S-adenosyl-L-methionine (SAM)-dependent reaction. The sequence is that of Phosphomethylpyrimidine synthase from Mycobacteroides abscessus (strain ATCC 19977 / DSM 44196 / CCUG 20993 / CIP 104536 / JCM 13569 / NCTC 13031 / TMC 1543 / L948) (Mycobacterium abscessus).